Here is a 1134-residue protein sequence, read N- to C-terminus: Ovochymase-1 (1134 aa).

An N-terminal signal peptide occupies residues 1-22 (MGLLASAGLLLLLVIGHPRSLG). Residues 23 to 46 (LKCGIRMVNMKSKEPAVGSRFFSR) constitute a propeptide, activation peptide. Positions 38–296 (AVGSRFFSRI…LMDFITQNLF (259 aa)) constitute a Peptidase S1 1 domain. N-linked (GlcNAc...) asparagine glycosylation occurs at Asn-52. A disulfide bond links Cys-72 and Cys-88. His-87 serves as the catalytic Charge relay system. N-linked (GlcNAc...) asparagine glycosylation is present at Asn-99. Glu-116 is a Ca(2+) binding site. The Charge relay system role is filled by Asp-139. 3 disulfides stabilise this stretch: Cys-173–Cys-243, Cys-204–Cys-222, and Cys-233–Cys-262. Ser-237 serves as the catalytic Charge relay system. 2 consecutive CUB domains span residues 284–410 (VSEL…VTAV) and 419–531 (CGSL…FTIL). N-linked (GlcNAc...) asparagine glycosylation occurs at Asn-324. 3 disulfide bridges follow: Cys-341/Cys-373, Cys-419/Cys-446, and Cys-473/Cys-494. An N-linked (GlcNAc...) asparagine glycan is attached at Asn-431. The N-linked (GlcNAc...) asparagine glycan is linked to Asn-507. In terms of domain architecture, Peptidase S1 2 spans 575–812 (IAGGEEACPH…FLDWIQSKIN (238 aa)). Cys-600 and Cys-616 form a disulfide bridge. Active-site charge relay system residues include His-615 and Asp-664. Cystine bridges form between Cys-698-Cys-769, Cys-729-Cys-747, Cys-759-Cys-788, and Cys-846-Cys-873. The active-site Charge relay system is the Ser-763. Residues 846–957 (CSEAELEKPR…GAFGISYIVL (112 aa)) form the CUB 3 domain. Residue Asn-1106 is glycosylated (N-linked (GlcNAc...) asparagine).

It belongs to the peptidase S1 family.

The protein resides in the secreted. The protein is Ovochymase-1 (OVCH1) of Homo sapiens (Human).